The following is a 1536-amino-acid chain: Alpha-2-macroglobulin (1536 aa).

The N-terminal stretch at 1 to 23 (MGMKRLIFLVFLLISFSLFGGYA) is a signal peptide. Positions 919–922 (CVEQ) form a cross-link, isoglutamyl cysteine thioester (Cys-Gln).

It belongs to the protease inhibitor I39 (alpha-2-macroglobulin) family. Bacterial alpha-2-macroglobulin subfamily.

Functionally, protects the bacterial cell from peptidases. The sequence is that of Alpha-2-macroglobulin from Thermotoga maritima (strain ATCC 43589 / DSM 3109 / JCM 10099 / NBRC 100826 / MSB8).